The primary structure comprises 140 residues: Cystatin-C (140 aa).

The first 20 residues, 1–20, serve as a signal peptide directing secretion; that stretch reads MASPLRSLMLLLAVLAVAWA. The short motif at 75–79 is the Secondary area of contact element; it reads QLVAG. Disulfide bonds link Cys-93–Cys-103 and Cys-117–Cys-137. A glycan (N-linked (GlcNAc...) asparagine) is linked at Asn-99.

This sequence belongs to the cystatin family.

It is found in the secreted. Its function is as follows. As an inhibitor of cysteine proteinases, this protein is thought to serve an important physiological role as a local regulator of this enzyme activity. Known to inhibit cathepsin B, H, and L. This chain is Cystatin-C (Cst3), found in Rattus norvegicus (Rat).